A 556-amino-acid chain; its full sequence is Arginine--tRNA ligase (556 aa).

A 'HIGH' region motif is present at residues Ala132–Gly142.

This sequence belongs to the class-I aminoacyl-tRNA synthetase family. As to quaternary structure, monomer.

The protein localises to the cytoplasm. The enzyme catalyses tRNA(Arg) + L-arginine + ATP = L-arginyl-tRNA(Arg) + AMP + diphosphate. The sequence is that of Arginine--tRNA ligase from Kocuria rhizophila (strain ATCC 9341 / DSM 348 / NBRC 103217 / DC2201).